The sequence spans 418 residues: uncharacterized protein (418 aa).

The tract at residues 1–24 is disordered; the sequence is MSGTAGFITVSPGPPTEAPGGFPR.

This sequence to A.pernix APE_1276 and S.solfataricus SSO2105.

This is an uncharacterized protein from Aeropyrum pernix (strain ATCC 700893 / DSM 11879 / JCM 9820 / NBRC 100138 / K1).